The sequence spans 385 residues: tRNA-specific 2-thiouridylase MnmA (385 aa).

Residues 18 to 25 and Leu-44 each bind ATP; that span reads AMSGGVDS. Catalysis depends on Cys-112, which acts as the Nucleophile. Cys-112 and Cys-209 form a disulfide bridge. Gly-136 is an ATP binding site. Positions 159-161 are interaction with tRNA; it reads RDQ. The active-site Cysteine persulfide intermediate is the Cys-209.

It belongs to the MnmA/TRMU family.

It localises to the cytoplasm. The catalysed reaction is S-sulfanyl-L-cysteinyl-[protein] + uridine(34) in tRNA + AH2 + ATP = 2-thiouridine(34) in tRNA + L-cysteinyl-[protein] + A + AMP + diphosphate + H(+). Functionally, catalyzes the 2-thiolation of uridine at the wobble position (U34) of tRNA, leading to the formation of s(2)U34. In Methylorubrum extorquens (strain PA1) (Methylobacterium extorquens), this protein is tRNA-specific 2-thiouridylase MnmA.